A 230-amino-acid polypeptide reads, in one-letter code: Probable tetraspanin tspD (230 aa).

The Cytoplasmic portion of the chain corresponds to 1–20 (MVEYLPSTPRYLKVPLIILN). Residues 21–41 (VILWLLGLVLVIIGGICVGFF) traverse the membrane as a helical segment. Topologically, residues 42-65 (SRFKELQEVGGVSESIKSISVSLP) are extracellular. The chain crosses the membrane as a helical span at residues 66–86 (AGVLSIGIFFMVLTVAGCIVA). Residues 87–90 (YKEK) are Cytoplasmic-facing. A helical transmembrane segment spans residues 91–111 (MVGLVFYTILMLVLLVVLIGI). The Extracellular portion of the chain corresponds to 112 to 200 (GGEALTYHNA…VNSKLYLVGS (89 aa)). Residues asparagine 133, asparagine 138, asparagine 163, and asparagine 179 are each glycosylated (N-linked (GlcNAc...) asparagine). A helical transmembrane segment spans residues 201-221 (AGVAIGVIELVSLMFALFLIV). The Cytoplasmic segment spans residues 222 to 230 (RLYKSNSYR).

It belongs to the tetraspanin (TM4SF) family.

It localises to the membrane. This Dictyostelium discoideum (Social amoeba) protein is Probable tetraspanin tspD (tspD).